A 725-amino-acid chain; its full sequence is Sodium/hydrogen exchanger 7 (725 aa).

Positions 1 to 20 (MEPGDAARPGSGRATGAPPP) are disordered. Residues 1-21 (MEPGDAARPGSGRATGAPPPR) lie on the Cytoplasmic side of the membrane. Residues 22–42 (LLLLPLLLGWGLRVAAAASAS) form a helical membrane-spanning segment. At 43–70 (SSGAAAEDSSAMEELATEKEAEESHRQD) the chain is on the lumenal side. The chain crosses the membrane as a helical span at residues 71-91 (SVSLLTFILLLTLTILTIWLF). Over 92-95 (KHRR) the chain is Cytoplasmic. A helical membrane pass occupies residues 96 to 116 (VRFLHETGLAMIYGLIVGVIL). Topologically, residues 117–175 (RYGTPATSGRDKSLSCTQEDRAFSTLLVNVSGKFFEYTLKGEISPGKINSVEQNDMLRK) are lumenal. A glycan (N-linked (GlcNAc...) asparagine) is linked at Asn145. Residues 176 to 196 (VTFDPEVFFNILLPPIIFHAG) traverse the membrane as a helical segment. At 197 to 210 (YSLKKRHFFRNLGS) the chain is on the cytoplasmic side. Residues 211–231 (ILAYAFLGTAVSCFIIGNLMY) traverse the membrane as a helical segment. Residues 232 to 251 (GVVKLMKIMGQLSDKFYYTD) are Lumenal-facing. A helical membrane pass occupies residues 252–272 (CLFFGAIISATDPVTVLAIFN). At 273 to 277 (ELHAD) the chain is on the cytoplasmic side. The chain crosses the membrane as a helical span at residues 278–298 (VDLYALLFGESVLNDAVAIVL). Topologically, residues 299–322 (SSSIVAYQPAGLNTHAFDAAAFFK) are lumenal. Residues 323–343 (SVGIFLGIFSGSFTMGAVTGV) form a helical membrane-spanning segment. The Cytoplasmic portion of the chain corresponds to 344–349 (NANVTK). The next 2 helical transmembrane spans lie at 350–370 (FTKL…MSWS) and 371–391 (TFLL…FCGI). The Cytoplasmic segment spans residues 392–414 (TQAHYTYNNLSVESRSRTKQLFE). A helical transmembrane segment spans residues 415-435 (VLHFLAENFIFSYMGLALFTF). At 436 to 442 (QKHVFSP) the chain is on the lumenal side. A helical transmembrane segment spans residues 443–463 (IFIIGAFVAIFLGRAAHIYPL). The Cytoplasmic segment spans residues 464–474 (SFFLNLGRRHK). Residues 475 to 497 (IGWNFQHMMMFSGLRGAMAFALA) traverse the membrane as a helical segment. At 498–513 (IRDTASYARQMMFTTT) the chain is on the lumenal side. Residues 514–534 (LLIVFFTVWIIGGGTTPMLSW) traverse the membrane as a helical segment. Required for trans-Golgi network localization regions lie at residues 533–559 (SWLN…YFRV) and 563–568 (PDQDPP). At 535–725 (LNIRVGVEEP…RLVFPLEDNA (191 aa)) the chain is on the cytoplasmic side. At Ser545 the chain carries Phosphoserine. 2 disordered regions span residues 567–590 (PPPN…GNRT) and 669–714 (TVTA…SSRG). Low complexity predominate over residues 675–684 (SSSSHTASTS). The span at 687–704 (GSRRTKSSSEEVLERDLG) shows a compositional bias: basic and acidic residues.

It belongs to the monovalent cation:proton antiporter 1 (CPA1) transporter (TC 2.A.36) family. In terms of assembly, interacts with SCAMP1, SCAMP2 and SCAMP5; may participate in its shuttling from trans-Golgi network to recycling endosomes. In terms of processing, N-glycosylated. As to expression, ubiquitously expressed.

Its subcellular location is the golgi apparatus. It localises to the trans-Golgi network membrane. It is found in the recycling endosome membrane. The protein resides in the cell membrane. The catalysed reaction is Na(+)(in) + H(+)(out) = Na(+)(out) + H(+)(in). It carries out the reaction K(+)(in) + H(+)(out) = K(+)(out) + H(+)(in). With respect to regulation, inhibited by benzamil and quinine but not by amiloride. In terms of biological role, golgi Na(+), K(+)/(H+) antiporter. Mediates the electoneutral influx of Na(+) or K(+) in exchange for H(+). May contribute to the regulation of Golgi apparatus volume and pH. This Homo sapiens (Human) protein is Sodium/hydrogen exchanger 7 (SLC9A7).